Consider the following 369-residue polypeptide: Glutamate 5-kinase (369 aa).

Position 14 (K14) interacts with ATP. Residues S56, D143, and N155 each coordinate substrate. Residues 175–176 (SD) and 215–221 (TGGMASK) contribute to the ATP site. In terms of domain architecture, PUA spans 277 to 351 (AGKIRLDQGA…GMKTQELPDD (75 aa)).

Belongs to the glutamate 5-kinase family.

The protein localises to the cytoplasm. The enzyme catalyses L-glutamate + ATP = L-glutamyl 5-phosphate + ADP. Its pathway is amino-acid biosynthesis; L-proline biosynthesis; L-glutamate 5-semialdehyde from L-glutamate: step 1/2. Its function is as follows. Catalyzes the transfer of a phosphate group to glutamate to form L-glutamate 5-phosphate. The chain is Glutamate 5-kinase from Corynebacterium efficiens (strain DSM 44549 / YS-314 / AJ 12310 / JCM 11189 / NBRC 100395).